The sequence spans 136 residues: ATP synthase epsilon chain 2 (136 aa).

Belongs to the ATPase epsilon chain family. As to quaternary structure, F-type ATPases have 2 components, CF(1) - the catalytic core - and CF(0) - the membrane proton channel. CF(1) has five subunits: alpha(3), beta(3), gamma(1), delta(1), epsilon(1). CF(0) has three main subunits: a, b and c.

The protein resides in the cell inner membrane. Functionally, produces ATP from ADP in the presence of a proton gradient across the membrane. The sequence is that of ATP synthase epsilon chain 2 from Nitrobacter hamburgensis (strain DSM 10229 / NCIMB 13809 / X14).